The primary structure comprises 396 residues: E3 ubiquitin-protein transferase MAEA (396 aa).

The LisH domain maps to 121–153 (KKKRMDRMMVEHLLRCGYYNTAVKLARQSEIED). A CTLH domain is found at 159–216 (MFLTAKEVEESLERQETMTCLAWCHDNKSRLRKMKSCLEFSLRIQEFIELIRQNKRLD). The RING-Gid-type zinc finger occupies 314–381 (CPVCSKSLNK…QDDKVVCPRT (68 aa)).

In terms of assembly, identified in the CTLH complex that contains at least MAEA, RMND5A, GID8, WDR26, and RANBP9 and/or RANBP10 as the catalytic core. Interacts with F-actin.

It is found in the nucleus matrix. The protein resides in the cell membrane. It localises to the cytoplasm. Its subcellular location is the cytoskeleton. The enzyme catalyses S-ubiquitinyl-[E2 ubiquitin-conjugating enzyme]-L-cysteine + [acceptor protein]-L-lysine = [E2 ubiquitin-conjugating enzyme]-L-cysteine + N(6)-ubiquitinyl-[acceptor protein]-L-lysine.. Its function is as follows. Core component of the CTLH E3 ubiquitin-protein ligase complex that selectively accepts ubiquitin from UBE2H and mediates ubiquitination and subsequent proteasomal degradation of the transcription factor HBP1. MAEA and RMND5A are both required for catalytic activity of the CTLH E3 ubiquitin-protein ligase complex. MAEA is required for normal cell proliferation. The CTLH E3 ubiquitin-protein ligase complex is not required for the degradation of enzymes involved in gluconeogenesis, such as FBP1. Plays a role in erythroblast maturation and in the development of mature macrophages. Mediates the attachment of erythroid cell to mature macrophages; this MAEA-mediated contact inhibits erythroid cell apoptosis. Participates in erythroblastic island formation, which is the functional unit of definitive erythropoiesis. Associates with F-actin to regulate actin distribution in erythroblasts and macrophages. May contribute to nuclear architecture and cells division events. The protein is E3 ubiquitin-protein transferase MAEA (maea) of Xenopus laevis (African clawed frog).